Here is a 229-residue protein sequence, read N- to C-terminus: DNA mismatch repair protein MutH (229 aa).

It belongs to the MutH family.

Its subcellular location is the cytoplasm. Its function is as follows. Sequence-specific endonuclease that cleaves unmethylated GATC sequences. It is involved in DNA mismatch repair. This Escherichia coli (strain SMS-3-5 / SECEC) protein is DNA mismatch repair protein MutH.